The chain runs to 151 residues: Transcriptional regulator MraZ (151 aa).

2 SpoVT-AbrB domains span residues 5 to 52 and 81 to 124; these read ANAV…PLDE and AVDL…DEDA.

The protein belongs to the MraZ family. Forms oligomers.

It is found in the cytoplasm. It localises to the nucleoid. The sequence is that of Transcriptional regulator MraZ from Pseudomonas putida (strain W619).